A 646-amino-acid chain; its full sequence is Mitochondrial distribution and morphology protein 10 (646 aa).

2 disordered regions span residues 206 to 230 (KSTSSSMDRLDSSNPSLSSSTSLSN) and 315 to 347 (ETSSSASYPQRNGSVLHTGSSSSSEDTEAGGGL). The segment covering 207–230 (STSSSMDRLDSSNPSLSSSTSLSN) has biased composition (low complexity). A compositionally biased stretch (polar residues) spans 315–333 (ETSSSASYPQRNGSVLHTG).

This sequence belongs to the MDM10 family. In terms of assembly, component of the ER-mitochondria encounter structure (ERMES) or MDM complex, composed of MMM1, MDM10, MDM12 and MDM34. Associates with the mitochondrial outer membrane sorting assembly machinery SAM(core) complex.

The protein resides in the mitochondrion outer membrane. Its function is as follows. Component of the ERMES/MDM complex, which serves as a molecular tether to connect the endoplasmic reticulum and mitochondria. Components of this complex are involved in the control of mitochondrial shape and protein biogenesis and may function in phospholipid exchange. MDM10 is involved in the late assembly steps of the general translocase of the mitochondrial outer membrane (TOM complex). Functions in the TOM40-specific route of the assembly of outer membrane beta-barrel proteins, including the association of TOM40 with the receptor TOM22 and small TOM proteins. Can associate with the SAM(core) complex as well as the MDM12-MMM1 complex, both involved in late steps of the major beta-barrel assembly pathway, that is responsible for biogenesis of all outer membrane beta-barrel proteins. May act as a switch that shuttles between both complexes and channels precursor proteins into the TOM40-specific pathway. Plays a role in mitochondrial morphology and in the inheritance of mitochondria. This is Mitochondrial distribution and morphology protein 10 from Mycosarcoma maydis (Corn smut fungus).